Here is a 360-residue protein sequence, read N- to C-terminus: MCVEESEGAERLDFGEPAAAAADAGKSKSKSPDELPSPRMERVCENTTAADFKQNKSGNFVPNIRSGDWSDIGGRQYMEDTHVCITDLAKNFGYQSVDNEAISFYGVFDGHGGKDAAHFVRDNLPRIIVEDADFPLELEKVVRRSFVHADNQFAKTTLSSGTTALTAMIFGRTLLIANAGDCRAVLSRCGTAIEMSVDHRPCSLSEKLRVESLGGYVDDGYLNGLLGVTRALGDWHLEGMKEAGNPGGPLSAEPELKMITLTKDDEFLIIGSDGIWDVFSNQNVVDFARRRLQEHNDVKSCCREIVEEAIKRGATDNLTAVLVSFHLEAPPQVRVSRPGRVARSISAEGLNSLRTLLRNQ.

A disordered region spans residues 1–39 (MCVEESEGAERLDFGEPAAAAADAGKSKSKSPDELPSPR). The 261-residue stretch at 65 to 325 (RSGDWSDIGG…DNLTAVLVSF (261 aa)) folds into the PPM-type phosphatase domain. Positions 109, 110, 273, and 316 each coordinate Mn(2+).

The protein belongs to the PP2C family. Requires Mg(2+) as cofactor. It depends on Mn(2+) as a cofactor.

The catalysed reaction is O-phospho-L-seryl-[protein] + H2O = L-seryl-[protein] + phosphate. It carries out the reaction O-phospho-L-threonyl-[protein] + H2O = L-threonyl-[protein] + phosphate. This Oryza sativa subsp. japonica (Rice) protein is Probable protein phosphatase 2C 54.